The primary structure comprises 208 residues: Small ribosomal subunit protein uS4 (208 aa).

Residues 98-163 form the S4 RNA-binding domain; it reads SRLDNVVYRA…LTPFVIARAV (66 aa).

This sequence belongs to the universal ribosomal protein uS4 family. Part of the 30S ribosomal subunit. Contacts protein S5. The interaction surface between S4 and S5 is involved in control of translational fidelity.

In terms of biological role, one of the primary rRNA binding proteins, it binds directly to 16S rRNA where it nucleates assembly of the body of the 30S subunit. With S5 and S12 plays an important role in translational accuracy. In Acidothermus cellulolyticus (strain ATCC 43068 / DSM 8971 / 11B), this protein is Small ribosomal subunit protein uS4.